Consider the following 301-residue polypeptide: Homoserine kinase (301 aa).

89-99 contributes to the ATP binding site; it reads KPGSGLGSSSA.

Belongs to the GHMP kinase family. Homoserine kinase subfamily.

Its subcellular location is the cytoplasm. The catalysed reaction is L-homoserine + ATP = O-phospho-L-homoserine + ADP + H(+). It participates in amino-acid biosynthesis; L-threonine biosynthesis; L-threonine from L-aspartate: step 4/5. Functionally, catalyzes the ATP-dependent phosphorylation of L-homoserine to L-homoserine phosphate. The sequence is that of Homoserine kinase from Methanococcus maripaludis (strain DSM 14266 / JCM 13030 / NBRC 101832 / S2 / LL).